Reading from the N-terminus, the 380-residue chain is Glucose-1-phosphate adenylyltransferase (380 aa).

Alpha-D-glucose 1-phosphate is bound by residues Gly164, 179–180, and Ser190; that span reads EK.

This sequence belongs to the bacterial/plant glucose-1-phosphate adenylyltransferase family. As to quaternary structure, homotetramer.

The enzyme catalyses alpha-D-glucose 1-phosphate + ATP + H(+) = ADP-alpha-D-glucose + diphosphate. Its pathway is glycan biosynthesis; glycogen biosynthesis. Its function is as follows. Involved in the biosynthesis of ADP-glucose, a building block required for the elongation reactions to produce glycogen. Catalyzes the reaction between ATP and alpha-D-glucose 1-phosphate (G1P) to produce pyrophosphate and ADP-Glc. This chain is Glucose-1-phosphate adenylyltransferase, found in Lactococcus lactis subsp. lactis (strain IL1403) (Streptococcus lactis).